Here is a 93-residue protein sequence, read N- to C-terminus: Small ribosomal subunit protein uS19 (93 aa).

The protein belongs to the universal ribosomal protein uS19 family.

In terms of biological role, protein S19 forms a complex with S13 that binds strongly to the 16S ribosomal RNA. This is Small ribosomal subunit protein uS19 from Ruminiclostridium cellulolyticum (strain ATCC 35319 / DSM 5812 / JCM 6584 / H10) (Clostridium cellulolyticum).